The primary structure comprises 248 residues: Triosephosphate isomerase (248 aa).

D-glyceraldehyde 3-phosphate-binding residues include Asn10 and Lys12. The active-site Electrophile is His95. Glu165 acts as the Proton acceptor in catalysis. Residues Gly171, Leu230, and Gly232 to Asn233 each bind D-glyceraldehyde 3-phosphate.

It belongs to the triosephosphate isomerase family. Homodimer.

It carries out the reaction D-glyceraldehyde 3-phosphate = dihydroxyacetone phosphate. It participates in carbohydrate biosynthesis; gluconeogenesis. It functions in the pathway carbohydrate degradation; glycolysis; D-glyceraldehyde 3-phosphate from glycerone phosphate: step 1/1. Functionally, catalyzes the interconversion of glyceraldehyde 3-phosphate and dihydroxyacetone phosphate in the glycolytic and gluconeogenic pathways. This Plasmodium falciparum (isolate 3D7) protein is Triosephosphate isomerase.